A 667-amino-acid polypeptide reads, in one-letter code: Small ribosomal subunit protein mS39 (667 aa).

A mitochondrion-targeting transit peptide spans 1–11 (MASSCSQALRH). Residues 199 to 226 (EAEQRSEEMEDIQDETQTKKGRSPKASD) are disordered. 6 PPR repeats span residues 249–283 (NTRS…RLKA), 284–323 (DVHI…KVKP), 324–360 (NLLT…SIEP), 361–400 (SLAS…SFTP), 482–516 (SSNA…GHGN), and 565–599 (TASS…NRVP).

The protein belongs to the mitochondrion-specific ribosomal protein mS39 family.

The protein resides in the mitochondrion. In terms of biological role, mitochondrial RNA-binding protein that may have a role in mitochondrial translation. The protein is Small ribosomal subunit protein mS39 (ptcd3) of Danio rerio (Zebrafish).